The chain runs to 455 residues: La-related protein 6C (455 aa).

Residues 1–20 are compositionally biased toward basic and acidic residues; it reads MAQMQREEVESVTTEKKRLD. The tract at residues 1-29 is disordered; sequence MAQMQREEVESVTTEKKRLDGGGGSSGAQ. The region spanning 138-229 is the HTH La-type RNA-binding domain; sequence NLLSDDLRLK…KRTSQFTDRD (92 aa). The 89-residue stretch at 236-324 folds into the RRM domain; that stretch reads RTVVAENLPD…KGLRVRLLLR (89 aa). Disordered regions lie at residues 348–396 and 414–455; these read SYES…YAVG and SLGS…PNNL.

The protein resides in the nucleus. In terms of biological role, transcriptional regulator. The sequence is that of La-related protein 6C (LARP6C) from Arabidopsis thaliana (Mouse-ear cress).